Consider the following 403-residue polypeptide: Ribosomal RNA large subunit methyltransferase I (403 aa).

The PUA domain maps to 9 to 86 (YPRLVLSKGR…KAESIDIAFF (78 aa)).

Belongs to the methyltransferase superfamily. RlmI family.

Its subcellular location is the cytoplasm. It catalyses the reaction cytidine(1962) in 23S rRNA + S-adenosyl-L-methionine = 5-methylcytidine(1962) in 23S rRNA + S-adenosyl-L-homocysteine + H(+). Its function is as follows. Specifically methylates the cytosine at position 1962 (m5C1962) of 23S rRNA. The chain is Ribosomal RNA large subunit methyltransferase I from Salmonella gallinarum (strain 287/91 / NCTC 13346).